The following is a 311-amino-acid chain: Methionyl-tRNA formyltransferase (311 aa).

Ser-112–Pro-115 serves as a coordination point for (6S)-5,6,7,8-tetrahydrofolate.

Belongs to the Fmt family.

It carries out the reaction L-methionyl-tRNA(fMet) + (6R)-10-formyltetrahydrofolate = N-formyl-L-methionyl-tRNA(fMet) + (6S)-5,6,7,8-tetrahydrofolate + H(+). In terms of biological role, attaches a formyl group to the free amino group of methionyl-tRNA(fMet). The formyl group appears to play a dual role in the initiator identity of N-formylmethionyl-tRNA by promoting its recognition by IF2 and preventing the misappropriation of this tRNA by the elongation apparatus. This is Methionyl-tRNA formyltransferase from Rhizobium leguminosarum bv. trifolii (strain WSM2304).